The chain runs to 283 residues: Non-selective voltage-gated ion channel VDAC3 (283 aa).

Position 2 is an N-acetylcysteine (C2). The residue at position 4 (T4) is a Phosphothreonine. N6-acetyllysine is present on residues K12, K15, and K20. 2 beta stranded membrane-spanning segments follow: residues 26–35 and 39–47; these read MVKIDLKTKS and VEFSTSGHA. T33 is subject to Phosphothreonine. K53 participates in a covalent cross-link: Glycyl lysine isopeptide (Lys-Gly) (interchain with G-Cter in ubiquitin). A run of 3 beta stranded transmembrane segments spans residues 54–64, 69–76, and 80–89; these read ASGNLETKYKV, LIFTQKWN, and TLGTEISWEN. Position 90 is an N6-acetyllysine (K90). A beta stranded membrane pass occupies residues 95–104; the sequence is LKLTVDTIFV. Glycyl lysine isopeptide (Lys-Gly) (interchain with G-Cter in ubiquitin) cross-links involve residues K109 and K110. 10 beta stranded membrane passes run 111–120, 123–130, 137–145, 150–158, 163–175, 178–185, 189–198, 202–211, 218–227, and 231–238; these read SGKLKASYRR, FSVGSKVD, TIYGWAVLA, LAGYQMSFD, KLCQ…GYKA, FQLHTHVN, EFGGSIYQRV, IETSINLAWT, RFGIAAKYRL, and TSLSAKVN. S241 carries the post-translational modification Phosphoserine. Residues 242–244 and 260–264 contribute to the NAD(+) site; these read LIG and SALVD. The next 2 membrane-spanning stretches (beta stranded) occupy residues 242–251 and 254–263; these read LIGLGYTQSL and GVKLTLSALV. K266 is modified (N6-acetyllysine; alternate). A Glycyl lysine isopeptide (Lys-Gly) (interchain with G-Cter in ubiquitin); alternate cross-link involves residue K266. Residues 273–282 traverse the membrane as a beta stranded segment; the sequence is HKVGLGFELE.

Belongs to the eukaryotic mitochondrial porin family. In terms of assembly, interacts with ARMC12 in a TBC1D21-dependent manner. Interacts with MISFA. Post-translationally, ubiquitinated by PRKN during mitophagy, leading to its degradation and enhancement of mitophagy. Deubiquitinated by USP30. In terms of tissue distribution, isoform 1 is widely expressed with strong expression in atrium and ascitic tumor, lower levels in brain and very low levels in liver and kidney. Isoform 2 is also widely expressed with highest levels in brain but no expression in kidney. Also expressed in flagella of epididymal sperm.

The protein localises to the mitochondrion outer membrane. It localises to the membrane. The enzyme catalyses chloride(in) = chloride(out). It carries out the reaction K(+)(in) = K(+)(out). In terms of biological role, non-selective voltage-gated ion channel that mediates the transport of anions and cations through the mitochondrion outer membrane and plasma membrane. Forms a high-conducting channel with a stable open state and a voltage-induced closure with a mild preference for anions over cations. Involved in male fertility and sperm mitochondrial sheath formation. This Rattus norvegicus (Rat) protein is Non-selective voltage-gated ion channel VDAC3.